A 639-amino-acid polypeptide reads, in one-letter code: tRNA (uracil(54)-C(5))-methyltransferase (639 aa).

The disordered stretch occupies residues 78-113; it reads VPPTMKHTVDNKRLSSPLTDSGNRRTKKPKLRKYKA. Residues serine 92 and serine 93 each carry the phosphoserine modification. Residues 101 to 113 show a composition bias toward basic residues; it reads RRTKKPKLRKYKA. Residues 163-228 enclose the TRAM domain; that stretch reads LQYHREVKNV…PYYVESDLLD (66 aa). 4 residues coordinate S-adenosyl-L-methionine: glutamine 461, tyrosine 496, glutamate 517, and aspartate 564. Catalysis depends on cysteine 591, which acts as the Nucleophile. Residue glutamate 631 is the Proton acceptor of the active site.

It belongs to the class I-like SAM-binding methyltransferase superfamily. RNA M5U methyltransferase family.

The enzyme catalyses uridine(54) in tRNA + S-adenosyl-L-methionine = 5-methyluridine(54) in tRNA + S-adenosyl-L-homocysteine + H(+). Functionally, catalyzes the formation of 5-methyl-uridine at position 54 (m5U54) in all tRNA. May also have a role in tRNA stabilization or maturation. This chain is tRNA (uracil(54)-C(5))-methyltransferase (TRM2), found in Saccharomyces cerevisiae (strain ATCC 204508 / S288c) (Baker's yeast).